The chain runs to 499 residues: Lysine--tRNA ligase (499 aa).

Residues Glu-408 and Glu-415 each coordinate Mg(2+).

This sequence belongs to the class-II aminoacyl-tRNA synthetase family. In terms of assembly, homodimer. Requires Mg(2+) as cofactor.

It is found in the cytoplasm. It carries out the reaction tRNA(Lys) + L-lysine + ATP = L-lysyl-tRNA(Lys) + AMP + diphosphate. In Bacillus cereus (strain ATCC 10987 / NRS 248), this protein is Lysine--tRNA ligase.